Consider the following 1612-residue polypeptide: uncharacterized protein (1612 aa).

A coiled-coil region spans residues glutamate 23 to asparagine 52. Over residues isoleucine 46–histidine 93 the composition is skewed to basic and acidic residues. Disordered stretches follow at residues isoleucine 46–valine 94 and glutamate 369–glutamine 400. A compositionally biased stretch (polar residues) spans aspartate 375–leucine 394. Residues phenylalanine 479–asparagine 499 traverse the membrane as a helical segment. Disordered regions lie at residues threonine 698–leucine 777, asparagine 992–proline 1037, serine 1091–serine 1157, and asparagine 1257–lysine 1291. The segment covering lysine 708–leucine 777 has biased composition (basic and acidic residues). 3 stretches are compositionally biased toward low complexity: residues asparagine 996 to asparagine 1028, serine 1102 to asparagine 1140, and asparagine 1257 to asparagine 1271. 3 coiled-coil regions span residues tyrosine 1338–lysine 1362, serine 1444–aspartate 1469, and asparagine 1553–threonine 1601. Over residues methionine 1554–glutamate 1566 the composition is skewed to basic and acidic residues. The interval methionine 1554–lysine 1612 is disordered. Over residues glycine 1567–aspartate 1597 the composition is skewed to acidic residues.

The protein localises to the membrane. This is an uncharacterized protein from Plasmodium falciparum (isolate 3D7).